The chain runs to 239 residues: MIKYKRILIKLSGEGFANKEKNLAIDFELVAKIASQLKIIIEKGVQVSIVVGGGNFWRGVSAEKNGIPRNRADFIGMLATEMNALALQSGFEKAGLKARVQSSINIDQKVAENYINEKTLKYLNNGEVVIFAGGTGRPYFTTDTAATLFAAEIKAEVILMGKNKVDGVYDSDPKKNENAKHFSKITYDQILEKKLQVMDLTATSMARDNNINLIVFNLLEDNSIIKALEGKITHTEVTR.

10–13 (KLSG) is a binding site for ATP. Gly53 is a UMP binding site. Positions 54 and 58 each coordinate ATP. Residues Asp73 and 135-142 (TGRPYFTT) each bind UMP. Asn163, Tyr169, and Asp172 together coordinate ATP.

It belongs to the UMP kinase family. As to quaternary structure, homohexamer.

Its subcellular location is the cytoplasm. It catalyses the reaction UMP + ATP = UDP + ADP. It participates in pyrimidine metabolism; CTP biosynthesis via de novo pathway; UDP from UMP (UMPK route): step 1/1. Its activity is regulated as follows. Inhibited by UTP. Catalyzes the reversible phosphorylation of UMP to UDP. The protein is Uridylate kinase of Mycoplasmopsis synoviae (strain 53) (Mycoplasma synoviae).